A 388-amino-acid chain; its full sequence is Phosphoribosylformylglycinamidine cyclo-ligase, chloroplastic/mitochondrial (388 aa).

This sequence belongs to the AIR synthase family.

It is found in the plastid. The protein resides in the chloroplast. It localises to the mitochondrion. The enzyme catalyses 2-formamido-N(1)-(5-O-phospho-beta-D-ribosyl)acetamidine + ATP = 5-amino-1-(5-phospho-beta-D-ribosyl)imidazole + ADP + phosphate + H(+). It participates in purine metabolism; IMP biosynthesis via de novo pathway; 5-amino-1-(5-phospho-D-ribosyl)imidazole from N(2)-formyl-N(1)-(5-phospho-D-ribosyl)glycinamide: step 2/2. The chain is Phosphoribosylformylglycinamidine cyclo-ligase, chloroplastic/mitochondrial (PUR5) from Vigna unguiculata (Cowpea).